The following is a 184-amino-acid chain: V-type proton ATPase subunit E (184 aa).

It belongs to the V-ATPase E subunit family.

Functionally, produces ATP from ADP in the presence of a proton gradient across the membrane. The polypeptide is V-type proton ATPase subunit E (Finegoldia magna (strain ATCC 29328 / DSM 20472 / WAL 2508) (Peptostreptococcus magnus)).